The chain runs to 280 residues: MIDKEYQRIMTERTASAPRAKKSLGQNFLQDKNISAKIVAALQIGPADCVIEIGPGPGALTDFIQKAAPASLWLLEKDTYWAGEHRRSDSRTPVEKQVVLTDALTFPWERLSDDRSWKLIGNLPYNVASPLMWDCLSLAAFSRAVFMIQKEVGDRIVAAPRSRQYGALSVWLQSHTVPRKELIVPPTVFKPRPKVDSAVLSFAPLPLSARNFSPGALSVLLKICFQQRRKQLQKILKRYWSDAVCGWFEQQGLPPAARPEELSPNQFQQLANLLESQLVS.

Residues Asn27, Leu29, Gly54, Glu76, Asp102, and Asn122 each coordinate S-adenosyl-L-methionine.

The protein belongs to the class I-like SAM-binding methyltransferase superfamily. rRNA adenine N(6)-methyltransferase family. RsmA subfamily.

The protein resides in the cytoplasm. It carries out the reaction adenosine(1518)/adenosine(1519) in 16S rRNA + 4 S-adenosyl-L-methionine = N(6)-dimethyladenosine(1518)/N(6)-dimethyladenosine(1519) in 16S rRNA + 4 S-adenosyl-L-homocysteine + 4 H(+). Functionally, specifically dimethylates two adjacent adenosines (A1518 and A1519) in the loop of a conserved hairpin near the 3'-end of 16S rRNA in the 30S particle. May play a critical role in biogenesis of 30S subunits. This Oleidesulfovibrio alaskensis (strain ATCC BAA-1058 / DSM 17464 / G20) (Desulfovibrio alaskensis) protein is Ribosomal RNA small subunit methyltransferase A.